Here is a 763-residue protein sequence, read N- to C-terminus: Phosphoglycerol transferase I (763 aa).

4 helical membrane passes run 1–21 (MSEL…AWKA), 26–46 (WWFA…ITLY), 77–97 (ILPG…LGWI), and 108–128 (FGYS…SPAF).

This sequence belongs to the OpgB family.

It is found in the cell inner membrane. It catalyses the reaction a phosphatidylglycerol + a membrane-derived-oligosaccharide D-glucose = a 1,2-diacyl-sn-glycerol + a membrane-derived-oligosaccharide 6-(glycerophospho)-D-glucose.. It participates in glycan metabolism; osmoregulated periplasmic glucan (OPG) biosynthesis. In terms of biological role, transfers a phosphoglycerol residue from phosphatidylglycerol to the membrane-bound nascent glucan backbones. This chain is Phosphoglycerol transferase I, found in Escherichia fergusonii (strain ATCC 35469 / DSM 13698 / CCUG 18766 / IAM 14443 / JCM 21226 / LMG 7866 / NBRC 102419 / NCTC 12128 / CDC 0568-73).